Consider the following 607-residue polypeptide: Arginine--tRNA ligase (607 aa).

The 'HIGH' region signature appears at 147–157 (PNIAKEMHVGH).

The protein belongs to the class-I aminoacyl-tRNA synthetase family. Monomer.

The protein localises to the cytoplasm. It catalyses the reaction tRNA(Arg) + L-arginine + ATP = L-arginyl-tRNA(Arg) + AMP + diphosphate. The sequence is that of Arginine--tRNA ligase from Prochlorococcus marinus (strain NATL2A).